The sequence spans 368 residues: Dihydroorotate dehydrogenase (quinone) (368 aa).

FMN-binding positions include 67 to 71 (AGFDK) and T91. K71 is a substrate binding site. A substrate-binding site is contributed by 116-120 (NRMGF). Residues N146 and N179 each contribute to the FMN site. Residue N179 participates in substrate binding. The Nucleophile role is filled by S182. Residue N184 coordinates substrate. Residues K222 and T250 each coordinate FMN. 251–252 (NT) contacts substrate. Residues G276, G305, and 326–327 (YS) contribute to the FMN site.

The protein belongs to the dihydroorotate dehydrogenase family. Type 2 subfamily. In terms of assembly, monomer. The cofactor is FMN.

The protein resides in the cell membrane. The enzyme catalyses (S)-dihydroorotate + a quinone = orotate + a quinol. The protein operates within pyrimidine metabolism; UMP biosynthesis via de novo pathway; orotate from (S)-dihydroorotate (quinone route): step 1/1. Functionally, catalyzes the conversion of dihydroorotate to orotate with quinone as electron acceptor. The sequence is that of Dihydroorotate dehydrogenase (quinone) from Streptomyces avermitilis (strain ATCC 31267 / DSM 46492 / JCM 5070 / NBRC 14893 / NCIMB 12804 / NRRL 8165 / MA-4680).